The following is a 63-amino-acid chain: uncharacterized protein (63 aa).

A helical transmembrane segment spans residues leucine 4–isoleucine 24.

It is found in the membrane. This is an uncharacterized protein from Invertebrate iridescent virus 6 (IIV-6).